Here is a 486-residue protein sequence, read N- to C-terminus: ATP synthase subunit beta, chloroplastic (486 aa).

154 to 161 lines the ATP pocket; that stretch reads GGAGVGKT.

Belongs to the ATPase alpha/beta chains family. In terms of assembly, F-type ATPases have 2 components, CF(1) - the catalytic core - and CF(0) - the membrane proton channel. CF(1) has five subunits: alpha(3), beta(3), gamma(1), delta(1), epsilon(1). CF(0) has four main subunits: a(1), b(1), b'(1) and c(9-12).

The protein localises to the plastid. The protein resides in the chloroplast thylakoid membrane. The enzyme catalyses ATP + H2O + 4 H(+)(in) = ADP + phosphate + 5 H(+)(out). Produces ATP from ADP in the presence of a proton gradient across the membrane. The catalytic sites are hosted primarily by the beta subunits. The sequence is that of ATP synthase subunit beta, chloroplastic from Dennstaedtia punctilobula (Hay-scented fern).